The primary structure comprises 476 residues: Serine protease HTRA1B (476 aa).

The first 19 residues, 1–19 (MRLLILCASIILVPLLCDA), serve as a signal peptide directing secretion. One can recognise an IGFBP N-terminal domain in the interval 25–109 (YVIGCPERCD…RGKTGVCVCK (85 aa)). Cystine bridges form between Cys-29–Cys-54, Cys-33–Cys-56, Cys-38–Cys-57, Cys-45–Cys-60, Cys-68–Cys-85, and Cys-79–Cys-106. A Kazal-like domain is found at 94 to 153 (TTTVRRRGKTGVCVCKSSEPVCGSDGVSYRNICELKRVSNRAQKLQQPPIIFIQRGACGK). The serine protease stretch occupies residues 200 to 360 (GSGFVVSEDG…IPSDKIRQFL (161 aa)). Catalysis depends on charge relay system residues His-216, Asp-246, and Ser-324. Residues 361–463 (AESHDRQAKG…LRAVVRRGNE (103 aa)) form the PDZ domain.

It belongs to the peptidase S1C family. In terms of assembly, forms homotrimers. In the presence of substrate, may form higher-order multimers in a PDZ-independent manner.

The protein localises to the secreted. Its subcellular location is the cytoplasm. It is found in the cytosol. Its function is as follows. Serine protease with a variety of targets, including extracellular matrix proteins and proteoglycans. Through cleavage of proteoglycans, may release soluble FGF-glycosaminoglycan complexes that promote the range and intensity of FGF signals in the extracellular space. Regulates the availability of insulin-like growth factors (IGFs) by cleaving IGF-binding proteins. Inhibits signaling mediated by TGF-beta family members. Consequently, may regulate many physiological processes. Intracellularly, degrades TSC2, leading to the activation of TSC2 downstream targets. This chain is Serine protease HTRA1B (htra1b), found in Danio rerio (Zebrafish).